Consider the following 210-residue polypeptide: Holliday junction branch migration complex subunit RuvA (210 aa).

Positions methionine 1–alanine 70 are domain I. Positions threonine 71–leucine 149 are domain II. A flexible linker region spans residues proline 150–valine 160. The interval valine 160 to glutamine 210 is domain III.

This sequence belongs to the RuvA family. As to quaternary structure, homotetramer. Forms an RuvA(8)-RuvB(12)-Holliday junction (HJ) complex. HJ DNA is sandwiched between 2 RuvA tetramers; dsDNA enters through RuvA and exits via RuvB. An RuvB hexamer assembles on each DNA strand where it exits the tetramer. Each RuvB hexamer is contacted by two RuvA subunits (via domain III) on 2 adjacent RuvB subunits; this complex drives branch migration. In the full resolvosome a probable DNA-RuvA(4)-RuvB(12)-RuvC(2) complex forms which resolves the HJ.

It localises to the cytoplasm. In terms of biological role, the RuvA-RuvB-RuvC complex processes Holliday junction (HJ) DNA during genetic recombination and DNA repair, while the RuvA-RuvB complex plays an important role in the rescue of blocked DNA replication forks via replication fork reversal (RFR). RuvA specifically binds to HJ cruciform DNA, conferring on it an open structure. The RuvB hexamer acts as an ATP-dependent pump, pulling dsDNA into and through the RuvAB complex. HJ branch migration allows RuvC to scan DNA until it finds its consensus sequence, where it cleaves and resolves the cruciform DNA. The chain is Holliday junction branch migration complex subunit RuvA from Rippkaea orientalis (strain PCC 8801 / RF-1) (Cyanothece sp. (strain PCC 8801)).